The primary structure comprises 64 residues: Large ribosomal subunit protein bL28 (64 aa).

This sequence belongs to the bacterial ribosomal protein bL28 family.

In Desulfotalea psychrophila (strain LSv54 / DSM 12343), this protein is Large ribosomal subunit protein bL28.